The primary structure comprises 243 residues: Carboxy-S-adenosyl-L-methionine synthase (243 aa).

S-adenosyl-L-methionine-binding positions include Tyr40, 65–67, 90–91, 118–119, Asn133, and Arg200; these read GCS, DN, and DI.

Belongs to the class I-like SAM-binding methyltransferase superfamily. Cx-SAM synthase family. Homodimer.

It catalyses the reaction prephenate + S-adenosyl-L-methionine = carboxy-S-adenosyl-L-methionine + 3-phenylpyruvate + H2O. Functionally, catalyzes the conversion of S-adenosyl-L-methionine (SAM) to carboxy-S-adenosyl-L-methionine (Cx-SAM). The protein is Carboxy-S-adenosyl-L-methionine synthase of Shewanella pealeana (strain ATCC 700345 / ANG-SQ1).